Reading from the N-terminus, the 729-residue chain is MATADEFSDEDTSPIEEVRLTVTNTDDPTLPVWTFRMWFLGLISCSLLSFLNQFFSYRTEPLVITQITVQVATLPIGHFLAKVLPKTRFGLPGCGSARFSLNPGPFNMKEHVLISIFANAGSAFGSGSAYAVGIITIIKAFYGRSISFIAGWLLIITTQVLGYGWAGLLRKYVVEPAHMWWPSTLVQVSLFRALHEKDDQRMTRAKFFVIALVCSFGWYIVPGYLFTTLTSISWVCWAFPRSVTAQQIGSGMRGLGLGAFTLDWTAVASFLFSPLISPFFAIANVFIGYVLLIYFVLPLAYWGFDSYNATRFPIFSSHLFTSVGNTYDIPAIVNDNFELDLAKYEQQGRINLSMFFALTYGLGFATIASTLTHVALFYGKEISERFRVSYKGKEDIHTRLMKRYKDIPSWWFYSMLAATLLISLALCVFLNDEVQMPWWGLVFASAMAFVFTLPISIITATTNQTPGLNIITEYAMGLIYPGRPIANVCFKVYGYMSMAQAVSFLNDFKLGHYMKIPPRSMFLVQFIGTILAGTINITVAWWQLNSIKNICQEELLPPNSPWTCPGDRVFFDASVIWGLVGPKRIFGSQGNYAAMNWFFLGGALGPVIVWSLHKAFPKRSWIPLVNLPVLLGATAMMPPATAVNYNSWILVGTIFNLFVFRYRKSWWQRYNYVLSAAMDAGVAFMAVLLYFSVGMEEKSLDWWGTRGEHCDLAKCPTARGVIVDGCPVK.

Position 2 is an N-acetylalanine (alanine 2). Serine 8 is modified (phosphoserine). A run of 16 helical transmembrane segments spans residues 37–57 (MWFL…FFSY), 61–81 (PLVI…HFLA), 123–143 (AFGS…AFYG), 148–168 (FIAG…WAGL), 177–194 (AHMW…FRAL), 207–227 (FFVI…YLFT), 256–276 (GLGA…SPLI), 279–299 (FFAI…VLPL), 352–372 (LSMF…STLT), 410–430 (WWFY…CVFL), 438–458 (WWGL…ISII), 522–542 (FLVQ…VAWW), 592–612 (YAAM…VWSL), 621–637 (WIPL…TAMM), 640–660 (ATAV…LFVF), and 673–693 (VLSA…YFSV).

This sequence belongs to the oligopeptide OPT transporter (TC 2.A.67.1) family. As to expression, expressed in flowers, leaves, roots, and stems.

The protein localises to the membrane. Its function is as follows. Involved in the translocation of tetra- and pentapeptides across the cellular membrane in an energy-dependent manner. The sequence is that of Oligopeptide transporter 4 (OPT4) from Arabidopsis thaliana (Mouse-ear cress).